Reading from the N-terminus, the 247-residue chain is MSGHNKWSTIKHKKGAADAKRGKVFSKLIKEITIAARMGGGDPDANPRLRTAINAAKAENMPKDNWERAIKKGTGELEGVNYEEFQYEGYGPGGGAVLVESLTDNKNRAAAEIRHIFSKCGGSLGEAGCVAWMFDKKGYIVVNQSVTDEDTLMEIALEAGAEDVREAGDVFEVITQPDDYDAVKEAIDAAGIETEDASVTKLPQNTVEVTGKEAEQMVRLLQTLDDCDDVQNVYTSADIPDDAIGED.

Belongs to the TACO1 family.

The protein localises to the cytoplasm. The chain is Probable transcriptional regulatory protein Dalk_2958 from Desulfatibacillum aliphaticivorans.